We begin with the raw amino-acid sequence, 333 residues long: L-asparagine oxygenase (333 aa).

Positions 125 and 146 each coordinate L-asparagine. The Fe cation site is built by H155 and E157. Residues E157 and N158 each coordinate L-asparagine. H287 is a Fe cation binding site. R301 serves as a coordination point for 2-oxoglutarate. An L-asparagine-binding site is contributed by R305.

The protein belongs to the clavaminate synthase family. Requires Fe(2+) as cofactor.

The catalysed reaction is L-asparagine + 2-oxoglutarate + O2 = (2S,3S)-3-hydroxyasparagine + succinate + CO2. Its pathway is antibiotic biosynthesis; calcium-dependent antibiotic biosynthesis. Its function is as follows. Catalyzes the 3-hydroxylation of L-asparagine to (2S,3S)-3-hydroxyasparagine. The 3-hydroxylated asparagine produced is incorporated at position 9 during the biosynthesis of the non-ribosomally synthesized calcium-dependent antibiotic (CDA), a 11-residue acidic lipopeptide lactone. Is able to hydroxylate only free L-asparagine, since it hydroxylates neither a CDA analog with unmodified Asn at position 9 nor a peptidyl-carrier-protein (PCP)-bound asparagine. Is not active toward D-asparagine. This is L-asparagine oxygenase (asnO) from Streptomyces coelicolor (strain ATCC BAA-471 / A3(2) / M145).